A 144-amino-acid chain; its full sequence is Cytochrome c3 (144 aa).

Positions 1-24 (MRYLVISLFAVSLLMAGSALVGNA) are cleaved as a signal peptide. Heme c-binding residues include His51, His54, Cys59, Cys62, His63, His64, Cys76, Cys81, His82, His100, Cys108, Cys111, His112, Cys125, Cys128, and His129.

This sequence belongs to the cytochrome c family. Homodimer. Heterotrimer of cytochrome c3 FDH2C and formate dehydrogenase FDH2 alpha and beta subunits that forms the FdhABC(3) complex. Binds 4 heme c groups per subunit.

The protein localises to the periplasm. Its function is as follows. Participates in sulfate respiration coupled with phosphorylation by transferring electrons from the enzyme dehydrogenase to ferredoxin. Gamma chain of the formate dehydrogenase (FDH) that catalyzes the reversible two-electron oxidation of formate to carbon dioxide. The gamma subunit of formate dehydrogenase forms a c-type heme. This chain is Cytochrome c3, found in Nitratidesulfovibrio vulgaris (strain ATCC 29579 / DSM 644 / CCUG 34227 / NCIMB 8303 / VKM B-1760 / Hildenborough) (Desulfovibrio vulgaris).